We begin with the raw amino-acid sequence, 130 residues long: Protein ApaG (130 aa).

The ApaG domain maps to Lys3–Arg127.

The sequence is that of Protein ApaG from Methylobacterium nodulans (strain LMG 21967 / CNCM I-2342 / ORS 2060).